Here is a 351-residue protein sequence, read N- to C-terminus: Cyanuric acid amidohydrolase (351 aa).

Residues 1-96 form an RU A region; sequence MPSLRAHVFR…HWTVFARETV (96 aa). Substrate-binding positions include Arg53 and 77–78; that span reads SG. Residues 103 to 240 are RU B; it reads ALAIGVSRTP…HEIIVLGMSA (138 aa). Lys153 is a catalytic residue. Substrate is bound by residues Arg185 and 223-224; that span reads SS. The active-site Nucleophile is Ser223. The tract at residues 246-351 is RU C; sequence LSIDHAVMRD…PVAIIVEKEQ (106 aa). Glu283 provides a ligand contact to Mg(2+). Residues Arg310 and 329–330 each bind substrate; that span reads SG. Mg(2+) is bound by residues Ala332, Gln335, Gly336, Pro337, and Gly340.

This sequence belongs to the cyclic amide hydrolase (CyAH) family. In terms of assembly, homotetramer.

The enzyme catalyses cyanurate + H2O = 1-carboxybiuret + H(+). Its pathway is xenobiotic degradation; atrazine degradation; biuret from cyanurate: step 1/1. With respect to regulation, inhibited by barbituric acid. Functionally, responsible for the hydrolysis of cyanuric acid, an intermediate formed during catabolism of s-triazine based compounds in herbicides such as atrazine and polymers such as melamine. Catalyzes the hydrolytic opening of the s-triazine ring of cyanuric acid (2,4,6-trihydroxy-s-triazine) to yield carbon dioxide and carboxybiuret, which spontaneously decarboxylates to biuret. In Rhizobium johnstonii (strain DSM 114642 / LMG 32736 / 3841) (Rhizobium leguminosarum bv. viciae), this protein is Cyanuric acid amidohydrolase.